The sequence spans 157 residues: Holo-[acyl-carrier-protein] synthase (157 aa).

Positions 8 and 59 each coordinate Mg(2+).

Belongs to the P-Pant transferase superfamily. AcpS family. It depends on Mg(2+) as a cofactor.

The protein resides in the cytoplasm. The enzyme catalyses apo-[ACP] + CoA = holo-[ACP] + adenosine 3',5'-bisphosphate + H(+). Transfers the 4'-phosphopantetheine moiety from coenzyme A to a Ser of acyl-carrier-protein. The chain is Holo-[acyl-carrier-protein] synthase from Gluconobacter oxydans (strain 621H) (Gluconobacter suboxydans).